A 222-amino-acid chain; its full sequence is MAAAGGGGAAAGRTYSFKVVLLGEGCVGKTSLVLRYCENKFNDKHITTLQASFLTKKLNIGGKRVNLAIWDTAGQERFHALGPIYYRDSNGAILVYDITDEDSFQKVKNWVKELRKMLGNEICLCIVGNKVDLEKERHVSIQEAESYAESVGAKHYHTSAKQNKGIEELFLDLCKRMIETAQVDERAKGNGSSQPGAARRGVQIIDDEPQAQSVGGGCCSSG.

Ala-2 bears the N-acetylalanine mark. GTP contacts are provided by Gly-25, Gly-28, Lys-29, Thr-30, Ser-31, Asn-42, Asp-43, His-45, Thr-47, and Thr-48. Position 30 (Thr-30) interacts with Mg(2+). Residues 40 to 53 (KFNDKHITTLQASF) carry the Switch 1 motif. Positions 48 and 71 each coordinate Mg(2+). The Switch 2 signature appears at 73 to 91 (AGQERFHALGPIYYRDSNG). GTP-binding residues include Gly-74, Asn-129, Lys-130, Asp-132, Ala-160, and Lys-161. 2 S-geranylgeranyl cysteine lipidation sites follow: Cys-218 and Cys-219. At Cys-219 the chain carries Cysteine methyl ester. Positions 220–222 (SSG) are cleaved as a propeptide — removed in mature form.

This sequence belongs to the small GTPase superfamily. Rab family. Interacts with the cytoplasmic tail of integrins ITGA1, ITGA2, ITGA5, ITGA6, ITGA11 and ITGB1; this interaction is dependent upon its GDP/GTP cycle. Interacts with RABGEF1 (via VPS9 domain). Interacts with ANKRD27. Interacts (in GTP-bound form) with VAMP8 in response to starvation; the interaction probably regulates VAMP8 endolysosomal trafficking. Interacts (active GTP-bound form) with TMED10; the interaction is indirect and regulates TMED10 abundance and localization at the Golgi. Requires Mg(2+) as cofactor.

The protein resides in the endoplasmic reticulum membrane. Its subcellular location is the golgi apparatus. It is found in the trans-Golgi network. The protein localises to the golgi apparatus membrane. It localises to the early endosome membrane. The protein resides in the cytoplasmic vesicle membrane. Its subcellular location is the cleavage furrow. It is found in the cell projection. The protein localises to the neuron projection. It catalyses the reaction GTP + H2O = GDP + phosphate + H(+). With respect to regulation, regulated by guanine nucleotide exchange factors (GEFs) including ANKRD27 and RABGEF1, which promote the exchange of bound GDP for free GTP. Regulated by GTPase activating proteins (GAPs) which increase the GTP hydrolysis activity. Inhibited by GDP dissociation inhibitors (GDIs). Its function is as follows. The small GTPases Rab are key regulators of intracellular membrane trafficking, from the formation of transport vesicles to their fusion with membranes. Rabs cycle between an inactive GDP-bound form and an active GTP-bound form that is able to recruit to membranes different sets of downstream effectors directly responsible for vesicle formation, movement, tethering and fusion. RAB21 is involved in membrane trafficking control. Regulates integrin internalization and recycling, but does not influence the traffic of endosomally translocated receptors in general. As a result, may regulate cell adhesion and migration. During the mitosis of adherent cells, controls the endosomal trafficking of integrins which is required for the successful completion of cytokinesis. Involved in neurite growth. Following SBF2/MTMT13-mediated activation in response to starvation-induced autophagy, binds to and regulates SNARE protein VAMP8 endolysosomal transport required for SNARE-mediated autophagosome-lysosome fusion. Modulates protein levels of the cargo receptors TMED2 and TMED10, and required for appropriate Golgi localization of TMED10. This Bos taurus (Bovine) protein is Ras-related protein Rab-21 (RAB21).